Consider the following 1248-residue polypeptide: Cullin-associated NEDD8-dissociated protein 1 (1248 aa).

HEAT repeat units lie at residues 44–82 (DESE…KVKE), 127–165 (PNVC…RFGE), 168–206 (VPFH…QANS), 365–403 (EDFY…NTRL), 425–463 (IEQL…SLPG), 510–548 (HPHI…VIRP), 604–642 (QNEL…LRID), 644–682 (TPIL…NYSS), 861–900 (DLSS…GSLQ), 976–1014 (LVNP…DQPQ), and 1054–1093 (PSLV…TVDD).

It belongs to the CAND family.

Functionally, key assembly factor of SCF (SKP1-CUL1-F-box protein) E3 ubiquitin ligase complexes that promotes the exchange of the substrate-recognition F-box subunit in SCF complexes, thereby playing a key role in the cellular repertoire of SCF complexes. Acts as a F-box protein exchange factor. Probably plays a similar role in other cullin-RING E3 ubiquitin ligase complexes. This chain is Cullin-associated NEDD8-dissociated protein 1 (Cand1), found in Drosophila melanogaster (Fruit fly).